The chain runs to 547 residues: Sterol carrier protein 2 (547 aa).

Residue Ser-3 is modified to Phosphoserine. Lys-132 bears the N6-acetyllysine; alternate mark. Lys-132 is modified (N6-succinyllysine; alternate). Lys-168 carries the N6-succinyllysine modification. N6-acetyllysine occurs at positions 173 and 177. Lys-183 is modified (N6-acetyllysine; alternate). Lys-183 is subject to N6-succinyllysine; alternate. Residue Lys-282 is modified to N6-succinyllysine. Lys-341, Lys-432, Lys-438, Lys-443, and Lys-453 each carry N6-acetyllysine; alternate. N6-succinyllysine; alternate occurs at positions 341, 432, 438, 443, and 453. An SCP2 domain is found at 433–543 (ANLVFKEIEK…KLQNLQLQPG (111 aa)). Lys-464 bears the N6-succinyllysine mark. N6-acetyllysine; alternate is present on Lys-470. Lys-470 is subject to N6-succinyllysine; alternate. Residue Lys-479 is modified to N6-succinyllysine. Lys-491 bears the N6-acetyllysine mark. Residues Lys-492 and Lys-511 each carry the N6-succinyllysine modification. At Ser-516 the chain carries Phosphoserine. N6-succinyllysine occurs at positions 522 and 534. Residues 545–547 (AKL) carry the Microbody targeting signal motif.

It in the N-terminal section; belongs to the thiolase-like superfamily. Thiolase family. As to quaternary structure, interacts with PEX5; the interaction is essential for peroxisomal import. Post-translationally, preSCP2, a protein with a molecular mass of about 15 kDa, is processed into its mature form (SCP2) by proteolytic cleavage of a 20 residue leader sequence after translocation into peroxisomes. In terms of tissue distribution, liver, fibroblasts, and placenta.

The protein resides in the peroxisome. It is found in the cytoplasm. It localises to the mitochondrion. The protein localises to the endoplasmic reticulum. It carries out the reaction choloyl-CoA + propanoyl-CoA = 3alpha,7alpha,12alpha-trihydroxy-24-oxo-5beta-cholestan-26-oyl-CoA + CoA. It catalyses the reaction 4,8,12-trimethyltridecanoyl-CoA + propanoyl-CoA = 3-oxopristanoyl-CoA + CoA. The enzyme catalyses an acyl-CoA + acetyl-CoA = a 3-oxoacyl-CoA + CoA. The catalysed reaction is hexanoyl-CoA + acetyl-CoA = 3-oxooctanoyl-CoA + CoA. It carries out the reaction tetradecanoyl-CoA + acetyl-CoA = 3-oxohexadecanoyl-CoA + CoA. It catalyses the reaction 3-oxohexadecanedioyl-CoA + CoA = tetradecanedioyl-CoA + acetyl-CoA. The enzyme catalyses propanoyl-CoA + tetradecanoyl-CoA = 3-oxo-2-methylhexadecanoyl-CoA + CoA. The catalysed reaction is butanoyl-CoA + acetyl-CoA = 3-oxohexanoyl-CoA + CoA. It carries out the reaction octanoyl-CoA + acetyl-CoA = 3-oxodecanoyl-CoA + CoA. It catalyses the reaction decanoyl-CoA + acetyl-CoA = 3-oxododecanoyl-CoA + CoA. The enzyme catalyses dodecanoyl-CoA + acetyl-CoA = 3-oxotetradecanoyl-CoA + CoA. The catalysed reaction is hexadecanoyl-CoA + acetyl-CoA = 3-oxooctadecanoyl-CoA + CoA. It carries out the reaction 3-oxo-(9Z-octadecenoyl)-CoA + CoA = (7Z)-hexadecenoyl-CoA + acetyl-CoA. It catalyses the reaction 7-dehydrocholesterol(in) = 7-dehydrocholesterol(out). In terms of biological role, plays a crucial role in the peroxisomal oxidation of branched-chain fatty acids. Catalyzes the last step of the peroxisomal beta-oxidation of branched chain fatty acids and the side chain of the bile acid intermediates di- and trihydroxycoprostanic acids (DHCA and THCA). Also active with medium and long straight chain 3-oxoacyl-CoAs. Stimulates the microsomal conversion of 7-dehydrocholesterol to cholesterol and transfers phosphatidylcholine and 7-dehydrocholesterol between membrances, in vitro. Isoforms SCP2 and SCPx cooperate in peroxisomal oxidation of certain naturally occurring tetramethyl-branched fatty acyl-CoAs. Mediates the transfer of all common phospholipids, cholesterol and gangliosides from the endoplasmic reticulum to the plasma membrane. May play a role in regulating steroidogenesis. Stimulates the microsomal conversion of 7-dehydrocholesterol to cholesterol. Also binds fatty acids and fatty acyl Coenzyme A (CoA) such as phytanoyl-CoA. Involved in the regulation phospholipid synthesis in endoplasmic reticulum enhancing the incorporation of exogenous fatty acid into glycerides. Seems to stimulate the rate-limiting step in phosphatidic acid formation mediated by GPAT3. Isoforms SCP2 and SCPx cooperate in peroxisomal oxidation of certain naturally occurring tetramethyl-branched fatty acyl-CoAs. In Homo sapiens (Human), this protein is Sterol carrier protein 2.